The sequence spans 406 residues: 5-cytosine rRNA methyltransferase NSUN4 (406 aa).

Residues glycine 207, glycine 208, lysine 209, aspartate 226, arginine 231, aspartate 259, glycine 260, and aspartate 277 each contribute to the S-adenosyl-L-methionine site. Catalysis depends on cysteine 332, which acts as the Nucleophile.

This sequence belongs to the class I-like SAM-binding methyltransferase superfamily. RsmB/NOP family.

The protein localises to the mitochondrion. The catalysed reaction is a cytidine in rRNA + S-adenosyl-L-methionine = a 5-methylcytidine in rRNA + S-adenosyl-L-homocysteine + H(+). The enzyme catalyses a cytidine in mRNA + S-adenosyl-L-methionine = a 5-methylcytidine in mRNA + S-adenosyl-L-homocysteine + H(+). Functionally, mitochondrial RNA cytosine C(5)-methyltransferase that methylates cytosine to 5-methylcytosine (m5C) in various RNAs, such as rRNAs, mRNAs and some long non-coding RNAs (lncRNAs). Involved in mitochondrial ribosome small subunit (SSU) maturation by catalyzing methylation of mitochondrial 12S rRNA. This Xenopus laevis (African clawed frog) protein is 5-cytosine rRNA methyltransferase NSUN4 (nsun4).